Reading from the N-terminus, the 227-residue chain is Cytochrome c oxidase subunit 2 (227 aa).

Residues 1-14 are Mitochondrial intermembrane-facing; sequence MAYPMQLGFQDATS. The helical transmembrane segment at 15 to 45 threads the bilayer; the sequence is PIMEELLHFHDHTLMIVFLISSLVLYVISLM. Residues 46-59 lie on the Mitochondrial matrix side of the membrane; sequence LTTKLTHTSTMDAQ. The chain crosses the membrane as a helical span at residues 60–87; the sequence is EVETIWTILPAIILILIALPSLRILYMM. Over 88-227 the chain is Mitochondrial intermembrane; that stretch reads DEINNPSLTV…YFEKWSASML (140 aa). Residues H161, C196, E198, C200, H204, and M207 each coordinate Cu cation. E198 contributes to the Mg(2+) binding site.

Belongs to the cytochrome c oxidase subunit 2 family. As to quaternary structure, component of the cytochrome c oxidase (complex IV, CIV), a multisubunit enzyme composed of 14 subunits. The complex is composed of a catalytic core of 3 subunits MT-CO1, MT-CO2 and MT-CO3, encoded in the mitochondrial DNA, and 11 supernumerary subunits COX4I, COX5A, COX5B, COX6A, COX6B, COX6C, COX7A, COX7B, COX7C, COX8 and NDUFA4, which are encoded in the nuclear genome. The complex exists as a monomer or a dimer and forms supercomplexes (SCs) in the inner mitochondrial membrane with NADH-ubiquinone oxidoreductase (complex I, CI) and ubiquinol-cytochrome c oxidoreductase (cytochrome b-c1 complex, complex III, CIII), resulting in different assemblies (supercomplex SCI(1)III(2)IV(1) and megacomplex MCI(2)III(2)IV(2)). Found in a complex with TMEM177, COA6, COX18, COX20, SCO1 and SCO2. Interacts with TMEM177 in a COX20-dependent manner. Interacts with COX20. Interacts with COX16. It depends on Cu cation as a cofactor.

It is found in the mitochondrion inner membrane. The catalysed reaction is 4 Fe(II)-[cytochrome c] + O2 + 8 H(+)(in) = 4 Fe(III)-[cytochrome c] + 2 H2O + 4 H(+)(out). Its function is as follows. Component of the cytochrome c oxidase, the last enzyme in the mitochondrial electron transport chain which drives oxidative phosphorylation. The respiratory chain contains 3 multisubunit complexes succinate dehydrogenase (complex II, CII), ubiquinol-cytochrome c oxidoreductase (cytochrome b-c1 complex, complex III, CIII) and cytochrome c oxidase (complex IV, CIV), that cooperate to transfer electrons derived from NADH and succinate to molecular oxygen, creating an electrochemical gradient over the inner membrane that drives transmembrane transport and the ATP synthase. Cytochrome c oxidase is the component of the respiratory chain that catalyzes the reduction of oxygen to water. Electrons originating from reduced cytochrome c in the intermembrane space (IMS) are transferred via the dinuclear copper A center (CU(A)) of subunit 2 and heme A of subunit 1 to the active site in subunit 1, a binuclear center (BNC) formed by heme A3 and copper B (CU(B)). The BNC reduces molecular oxygen to 2 water molecules using 4 electrons from cytochrome c in the IMS and 4 protons from the mitochondrial matrix. This chain is Cytochrome c oxidase subunit 2 (MT-CO2), found in Gazella spekei (Speke's gazelle).